Here is a 171-residue protein sequence, read N- to C-terminus: uncharacterized protein (171 aa).

A disordered region spans residues 139–171 (ARKPTKSDDEEEEVGKMGGISSSINSWVQRQKL). Residues 158-171 (ISSSINSWVQRQKL) are compositionally biased toward polar residues.

This is an uncharacterized protein from Caenorhabditis elegans.